Reading from the N-terminus, the 278-residue chain is Shikimate dehydrogenase (NADP(+)) (278 aa).

Residues 19-21 (SRS) and T66 each bind shikimate. K70 (proton acceptor) is an active-site residue. D82 contacts NADP(+). N91 and D107 together coordinate shikimate. NADP(+) contacts are provided by residues 133–137 (GAGGA), 157–162 (NRTRAK), and I222. Y224 contributes to the shikimate binding site. G245 lines the NADP(+) pocket.

It belongs to the shikimate dehydrogenase family. In terms of assembly, homodimer.

It catalyses the reaction shikimate + NADP(+) = 3-dehydroshikimate + NADPH + H(+). It functions in the pathway metabolic intermediate biosynthesis; chorismate biosynthesis; chorismate from D-erythrose 4-phosphate and phosphoenolpyruvate: step 4/7. Functionally, involved in the biosynthesis of the chorismate, which leads to the biosynthesis of aromatic amino acids. Catalyzes the reversible NADPH linked reduction of 3-dehydroshikimate (DHSA) to yield shikimate (SA). The chain is Shikimate dehydrogenase (NADP(+)) from Dinoroseobacter shibae (strain DSM 16493 / NCIMB 14021 / DFL 12).